Here is a 257-residue protein sequence, read N- to C-terminus: Phosphate import ATP-binding protein PstB (257 aa).

The 242-residue stretch at 5–246 (LEIKDLTAFY…EVIFTSPKNE (242 aa)) folds into the ABC transporter domain. An ATP-binding site is contributed by 37-44 (GPSGCGKS).

It belongs to the ABC transporter superfamily. Phosphate importer (TC 3.A.1.7) family. The complex is composed of two ATP-binding proteins (PstB), two transmembrane proteins (PstC and PstA) and a solute-binding protein (PstS).

The protein resides in the cell membrane. It carries out the reaction phosphate(out) + ATP + H2O = ADP + 2 phosphate(in) + H(+). Part of the ABC transporter complex PstSACB involved in phosphate import. Responsible for energy coupling to the transport system. This Tropheryma whipplei (strain Twist) (Whipple's bacillus) protein is Phosphate import ATP-binding protein PstB.